Reading from the N-terminus, the 892-residue chain is Iodate reductase subunit IdrA (892 aa).

C27, C30, and C34 together coordinate [3Fe-4S] cluster. Over residues 431–442 (RGGGHQRGGLSA) the composition is skewed to gly residues. A disordered region spans residues 431–452 (RGGGHQRGGLSAGGNSEWLSPE).

The protein belongs to the prokaryotic molybdopterin-containing oxidoreductase family. In terms of assembly, the iodate reductase (Idr) complex is composed of a molybdopterin-dependent iodate reductase (IdrA and IdrB subunits) and two associated peroxidases (IdrP1 and IdrP2). [3Fe-4S] cluster is required as a cofactor. The cofactor is Mo-bis(molybdopterin guanine dinucleotide).

Its subcellular location is the periplasm. Functionally, involved in iodate respiration. Probably catalyzes the reduction of iodate (IO(3)(-)) to hypoiodous acid (HIO) and H(2)O(2), using a reduced cytochrome c as the electron donor. This is Iodate reductase subunit IdrA from Pseudomonas sp. (strain SCT).